The following is a 447-amino-acid chain: GTPase Der (447 aa).

2 EngA-type G domains span residues 3-167 (PVIA…FAER) and 181-354 (TRIA…AAAM). GTP contacts are provided by residues 9 to 16 (GRPNVGKS), 56 to 60 (DTGGF), 119 to 122 (NKAE), 187 to 194 (GRPNVGKS), 234 to 238 (DTAGL), and 299 to 302 (NKWD). In terms of domain architecture, KH-like spans 355 to 439 (VKLPTPKLTR…PLRIEFRTNK (85 aa)).

It belongs to the TRAFAC class TrmE-Era-EngA-EngB-Septin-like GTPase superfamily. EngA (Der) GTPase family. In terms of assembly, associates with the 50S ribosomal subunit.

In terms of biological role, GTPase that plays an essential role in the late steps of ribosome biogenesis. The chain is GTPase Der from Ralstonia pickettii (strain 12J).